Reading from the N-terminus, the 608-residue chain is Tectonic-3 (608 aa).

An N-terminal signal peptide occupies residues 1–22; sequence MRTPQLALLQVFLLMFPDGVRP. The interval 23–58 is disordered; that stretch reads QPSSSPSGAVPTSLDLQPGTVGGTLQSSSEATATRP. Residues 23–586 lie on the Extracellular side of the membrane; the sequence is QPSSSPSGAV…AFSRGVSSQK (564 aa). A compositionally biased stretch (polar residues) spans 45–54; it reads GTLQSSSEAT. Asparagine 78, asparagine 179, and asparagine 347 each carry an N-linked (GlcNAc...) asparagine glycan. Residues 587-607 traverse the membrane as a helical segment; it reads CSVSPVLILCLLLLGVLNLET. Residue threonine 608 is a topological domain, cytoplasmic.

The protein belongs to the tectonic family. As to quaternary structure, part of the tectonic-like complex (also named B9 complex).

The protein localises to the membrane. Its function is as follows. Part of the tectonic-like complex which is required for tissue-specific ciliogenesis and may regulate ciliary membrane composition. May be involved in apoptosis regulation. Necessary for signal transduction through the sonic hedgehog (Shh) signaling pathway. This chain is Tectonic-3 (TCTN3), found in Macaca fascicularis (Crab-eating macaque).